The primary structure comprises 869 residues: Valine--tRNA ligase (869 aa).

Residues 47-57 carry the 'HIGH' region motif; that stretch reads PYPTGNFHIGN. A 'KMSKS' region motif is present at residues 521–525; it reads KMSKS. Lys524 is an ATP binding site.

This sequence belongs to the class-I aminoacyl-tRNA synthetase family. ValS type 2 subfamily.

Its subcellular location is the cytoplasm. The enzyme catalyses tRNA(Val) + L-valine + ATP = L-valyl-tRNA(Val) + AMP + diphosphate. Functionally, catalyzes the attachment of valine to tRNA(Val). As ValRS can inadvertently accommodate and process structurally similar amino acids such as threonine, to avoid such errors, it has a 'posttransfer' editing activity that hydrolyzes mischarged Thr-tRNA(Val) in a tRNA-dependent manner. The chain is Valine--tRNA ligase from Methanosarcina acetivorans (strain ATCC 35395 / DSM 2834 / JCM 12185 / C2A).